The chain runs to 283 residues: MNTVKTVRELRAAVARARSEGKRIGFVPTMGNLHAGHAALVKKAGERADFVVVSIFVNPLQFGPSEDLDTYPRTLAADQERLLEAGCHLLFTPTVEEMYPDGMDGQTRIHVPGVSEGLCGASRPGHFEGVATVVSKLLNMVQPDLALFGEKDFQQLAVIRKLVRDLNLPVQIFGEPTVRAADGLALSSRNGYLDEQQRAAAPAIYRTLRQLGERIRAGAEDFPALLADARQALEQAGLRPDYLEIREPISLRPGVPGDRQLVILAAAYLGSTRLIDNLSVHLD.

30–37 (MGNLHAGH) contacts ATP. Histidine 37 functions as the Proton donor in the catalytic mechanism. Glutamine 61 provides a ligand contact to (R)-pantoate. A beta-alanine-binding site is contributed by glutamine 61. 149–152 (GEKD) serves as a coordination point for ATP. Glutamine 155 is a binding site for (R)-pantoate. Residues valine 178 and 186–189 (LSSR) each bind ATP.

The protein belongs to the pantothenate synthetase family. As to quaternary structure, homodimer.

It localises to the cytoplasm. It carries out the reaction (R)-pantoate + beta-alanine + ATP = (R)-pantothenate + AMP + diphosphate + H(+). Its pathway is cofactor biosynthesis; (R)-pantothenate biosynthesis; (R)-pantothenate from (R)-pantoate and beta-alanine: step 1/1. In terms of biological role, catalyzes the condensation of pantoate with beta-alanine in an ATP-dependent reaction via a pantoyl-adenylate intermediate. The sequence is that of Pantothenate synthetase from Pseudomonas aeruginosa (strain UCBPP-PA14).